We begin with the raw amino-acid sequence, 525 residues long: DNA polymerase epsilon subunit 2 (525 aa).

It belongs to the DNA polymerase epsilon subunit B family. In terms of assembly, component of the epsilon DNA polymerase complex consisting of four subunits: the catalytic subunit PolE1/DNApol-epsilon255 and the accessory subunits PolE2/DNApol-epsilon58, Chrac-14/DNApolE3 and PolE4.

It localises to the nucleus. Accessory component of the DNA polymerase epsilon complex. Participates in DNA repair and in chromosomal DNA replication. Has a role in the entrance and progression through S phase. Has a role in endoreplication. Essential for viability and tissue development. The protein is DNA polymerase epsilon subunit 2 of Drosophila melanogaster (Fruit fly).